The following is a 179-amino-acid chain: Peptide deformylase 2 (179 aa).

Fe cation is bound by residues Cys102 and His144. Residue Glu145 is part of the active site. A Fe cation-binding site is contributed by His148.

Belongs to the polypeptide deformylase family. Fe(2+) serves as cofactor.

The catalysed reaction is N-terminal N-formyl-L-methionyl-[peptide] + H2O = N-terminal L-methionyl-[peptide] + formate. Its function is as follows. Removes the formyl group from the N-terminal Met of newly synthesized proteins. Requires at least a dipeptide for an efficient rate of reaction. N-terminal L-methionine is a prerequisite for activity but the enzyme has broad specificity at other positions. This is Peptide deformylase 2 from Nostoc sp. (strain PCC 7120 / SAG 25.82 / UTEX 2576).